The following is an 86-amino-acid chain: UPF0473 protein Clos_1662 (86 aa).

Belongs to the UPF0473 family.

This is UPF0473 protein Clos_1662 from Alkaliphilus oremlandii (strain OhILAs) (Clostridium oremlandii (strain OhILAs)).